Consider the following 264-residue polypeptide: Undecaprenyl-diphosphatase (264 aa).

The next 8 membrane-spanning stretches (helical) occupy residues G15–F37, A42–W62, Y84–I104, L108–V128, V143–F163, I182–D202, F217–I237, and L243–W263.

Belongs to the UppP family.

It localises to the cell inner membrane. It catalyses the reaction di-trans,octa-cis-undecaprenyl diphosphate + H2O = di-trans,octa-cis-undecaprenyl phosphate + phosphate + H(+). Its function is as follows. Catalyzes the dephosphorylation of undecaprenyl diphosphate (UPP). Confers resistance to bacitracin. The polypeptide is Undecaprenyl-diphosphatase (Maridesulfovibrio salexigens (strain ATCC 14822 / DSM 2638 / NCIMB 8403 / VKM B-1763) (Desulfovibrio salexigens)).